The chain runs to 214 residues: A-type ATP synthase subunit D (214 aa).

Belongs to the V-ATPase D subunit family. As to quaternary structure, has multiple subunits with at least A(3), B(3), C, D, E, F, H, I and proteolipid K(x).

The protein resides in the cell membrane. Functionally, component of the A-type ATP synthase that produces ATP from ADP in the presence of a proton gradient across the membrane. In Methanosphaera stadtmanae (strain ATCC 43021 / DSM 3091 / JCM 11832 / MCB-3), this protein is A-type ATP synthase subunit D.